The primary structure comprises 514 residues: Glutamyl-tRNA(Gln) amidotransferase subunit B, mitochondrial (514 aa).

It belongs to the GatB/GatE family. GatB subfamily. In terms of assembly, subunit of the heterotrimeric GatCAB amidotransferase (AdT) complex, composed of A, B and C subunits.

It localises to the mitochondrion. It catalyses the reaction L-glutamyl-tRNA(Gln) + L-glutamine + ATP + H2O = L-glutaminyl-tRNA(Gln) + L-glutamate + ADP + phosphate + H(+). Allows the formation of correctly charged Gln-tRNA(Gln) through the transamidation of misacylated Glu-tRNA(Gln) in the mitochondria. The reaction takes place in the presence of glutamine and ATP through an activated gamma-phospho-Glu-tRNA(Gln). The protein is Glutamyl-tRNA(Gln) amidotransferase subunit B, mitochondrial of Naegleria gruberi (Amoeba).